Here is a 288-residue protein sequence, read N- to C-terminus: Polyisoprenoid diphosphate/phosphate phosphohydrolase PLPP6 (288 aa).

Residues 1 to 82 form a disordered region; that stretch reads MPSPKARSGS…STGGGGQQLP (82 aa). The Cytoplasmic segment spans residues 1-127; it reads MPSPKARSGS…EDSSWGSVRP (127 aa). The chain crosses the membrane as a helical span at residues 128–148; that stretch reads LMKLIEVSGHGIPWLAGAAYC. At 149–161 the chain is on the lumenal side; sequence LYKSDSPAGQEVM. Residues 162 to 182 traverse the membrane as a helical segment; it reads LNLLMALVLDVVLVGVLKAVV. A phosphatase sequence motif I region spans residues 179 to 187; that stretch reads KAVVRRRRP. Residues 183 to 223 are Cytoplasmic-facing; that stretch reads RRRRPAHNRMDMFATFSVDSYSFPSGHATRAAMCARFLLNH. A phosphatase sequence motif II region spans residues 206-209; the sequence is PSGH. H209 functions as the Proton donors in the catalytic mechanism. The chain crosses the membrane as a helical span at residues 224 to 244; that stretch reads LVLAAPLRVLVLLWATIVGFS. A phosphatase sequence motif III region spans residues 244–255; that stretch reads SRVLLGRHNVTD. Residues 245-255 lie on the Lumenal side of the membrane; the sequence is RVLLGRHNVTD. The Nucleophile role is filled by H251. The helical transmembrane segment at 256 to 276 threads the bilayer; that stretch reads VAFGFFMGYWQYNLVEMLWLS. Residues 277 to 288 are Cytoplasmic-facing; the sequence is PVMLQSAIGQLH.

It belongs to the PA-phosphatase related phosphoesterase family.

It localises to the endoplasmic reticulum membrane. The protein localises to the nucleus envelope. Its subcellular location is the nucleus inner membrane. The enzyme catalyses presqualene diphosphate + H2O = presqualene phosphate + phosphate + H(+). The catalysed reaction is presqualene phosphate + H2O = presqualene alcohol + phosphate. It carries out the reaction (2E,6E)-farnesyl diphosphate + H2O = (2E,6E)-farnesyl phosphate + phosphate + H(+). It catalyses the reaction (2E,6E)-farnesyl phosphate + H2O = (2E,6E)-farnesol + phosphate. The enzyme catalyses (2E,6E,10E)-geranylgeranyl diphosphate + H2O = (2E,6E,10E)-geranylgeranyl phosphate + phosphate + H(+). The catalysed reaction is (2E,6E,10E)-geranylgeranyl phosphate + H2O = (2E,6E,10E)-geranylgeraniol + phosphate. It carries out the reaction (2E)-geranyl diphosphate + H2O = (2E)-geranyl phosphate + phosphate + H(+). It catalyses the reaction (2E)-geranyl phosphate + H2O = (2E)-geraniol + phosphate. The enzyme catalyses 1,2-dihexadecanoyl-sn-glycero-3-phosphate + H2O = 1,2-dihexadecanoyl-sn-glycerol + phosphate. Magnesium-independent polyisoprenoid diphosphatase that catalyzes the sequential dephosphorylation of presqualene, farnesyl, geranyl and geranylgeranyl diphosphates. May regulate the biosynthesis of cholesterol and related sterols by dephosphorylating presqualene and farnesyl diphosphate, two key intermediates in this biosynthetic pathway. May also play a role in protein prenylation by acting on farnesyl diphosphate and its derivative geranylgeranyl diphosphate, two precursors for the addition of isoprenoid anchors to membrane proteins. Has a lower activity towards phosphatidic acid (PA), but through phosphatidic acid dephosphorylation may participate in the biosynthesis of phospholipids and triacylglycerols. May also act on ceramide-1-P, lysophosphatidic acid (LPA) and sphing-4-enine 1-phosphate/sphingosine-1-phosphate. This chain is Polyisoprenoid diphosphate/phosphate phosphohydrolase PLPP6 (plpp6), found in Danio rerio (Zebrafish).